The following is a 253-amino-acid chain: Phycocyanobilin:ferredoxin oxidoreductase (253 aa).

The protein belongs to the HY2 family.

The catalysed reaction is (2R,3Z)-phycocyanobilin + 4 oxidized [2Fe-2S]-[ferredoxin] = biliverdin IXalpha + 4 reduced [2Fe-2S]-[ferredoxin] + 4 H(+). Catalyzes the four-electron reduction of biliverdin IX-alpha (2-electron reduction at both the A and D rings); the reaction proceeds via an isolatable 2-electron intermediate, 181,182-dihydrobiliverdin. In Gloeobacter violaceus (strain ATCC 29082 / PCC 7421), this protein is Phycocyanobilin:ferredoxin oxidoreductase (pcyA).